Consider the following 237-residue polypeptide: MRKVTLTLSAIALALSLNGAAMAKVHMPEVVSPGVTVTELAHQQPIKWVSVAEIEKSLEGQAPMAVGFDIDDTVLFSSPGFYRGKLEYSPNDFSYLKNPEFWEKMNNEWDKFSMPKQVGIDLVQMHLKRGDTVYFITGRTQTKTETVTKYVQEGLNIPADKMQPVIFAGDQPGANNKVSWMRDHKLKIYYGDADADIAAADELNIRGIRILRAANSSYQPLPKAGQFGEEVVINSEY.

Positions 1-23 (MRKVTLTLSAIALALSLNGAAMA) are cleaved as a signal peptide. D69 functions as the Nucleophile in the catalytic mechanism. Residues D69 and D71 each coordinate Mg(2+). D71 (proton donor) is an active-site residue. Substrate is bound by residues 137 to 138 (TG) and K177. Position 192 (D192) interacts with Mg(2+).

This sequence belongs to the class B bacterial acid phosphatase family. In terms of assembly, homotetramer. It depends on Mg(2+) as a cofactor.

It is found in the periplasm. It carries out the reaction a phosphate monoester + H2O = an alcohol + phosphate. Its function is as follows. Dephosphorylates several organic phosphate monoesters. Also has a phosphotransferase activity catalyzing the transfer of low-energy phosphate groups from organic phosphate monoesters to free hydroxyl groups of various organic compounds. The chain is Class B acid phosphatase from Proteus mirabilis (strain HI4320).